An 806-amino-acid polypeptide reads, in one-letter code: DNA topoisomerase 4 subunit A (806 aa).

Residues 33 to 499 (LPDARDGLKP…EEIKINLEVM (467 aa)) enclose the Topo IIA-type catalytic domain. The O-(5'-phospho-DNA)-tyrosine intermediate role is filled by Y121.

It belongs to the type II topoisomerase GyrA/ParC subunit family. ParC type 2 subfamily. Heterotetramer composed of ParC and ParE.

The protein resides in the cell membrane. The protein localises to the cytoplasm. The catalysed reaction is ATP-dependent breakage, passage and rejoining of double-stranded DNA.. In terms of biological role, topoisomerase IV is essential for chromosome segregation. It relaxes supercoiled DNA. Performs the decatenation events required during the replication of a circular DNA molecule. The protein is DNA topoisomerase 4 subunit A of Bacillus subtilis (strain 168).